The chain runs to 343 residues: Anthranilate phosphoribosyltransferase (343 aa).

5-phospho-alpha-D-ribose 1-diphosphate-binding positions include G84, 87 to 88 (GD), T92, 94 to 97 (NIST), 112 to 120 (KHGNRGVSS), and S124. G84 lines the anthranilate pocket. S96 serves as a coordination point for Mg(2+). N115 serves as a coordination point for anthranilate. Anthranilate is bound at residue R170. Mg(2+)-binding residues include D229 and E230.

The protein belongs to the anthranilate phosphoribosyltransferase family. As to quaternary structure, homodimer. Mg(2+) serves as cofactor.

It catalyses the reaction N-(5-phospho-beta-D-ribosyl)anthranilate + diphosphate = 5-phospho-alpha-D-ribose 1-diphosphate + anthranilate. Its pathway is amino-acid biosynthesis; L-tryptophan biosynthesis; L-tryptophan from chorismate: step 2/5. In terms of biological role, catalyzes the transfer of the phosphoribosyl group of 5-phosphorylribose-1-pyrophosphate (PRPP) to anthranilate to yield N-(5'-phosphoribosyl)-anthranilate (PRA). This chain is Anthranilate phosphoribosyltransferase, found in Burkholderia vietnamiensis (strain G4 / LMG 22486) (Burkholderia cepacia (strain R1808)).